A 375-amino-acid chain; its full sequence is Chlorophyll a/b light-harvesting protein PcbC (375 aa).

Helical transmembrane passes span 40-60 (LLGAHIAHAGLIAFWAGSITV), 102-122 (YFVIGILHLVTSAVLGAGGLF), 151-171 (LSLILGHHLLLLGILCLAFVA), 225-245 (IIGGHVYIGILELIGGTWHIL), 262-282 (AILSYSLGAVGWMGLLSGFFV), and 300-320 (GAAAVQYILGVLLLVGHVWHA). The disordered stretch occupies residues 352 to 375 (ARTFIGRGKPQPEPPKKKGLFGRG).

The protein belongs to the PsbB/PsbC family. IsiA/Pcb subfamily. In terms of assembly, the antenna complex consists of chlorophylls (a and b) and chlorophyll a/b binding proteins. The cofactor is chlorophyll a. Chlorophyll b serves as cofactor.

It localises to the cellular thylakoid membrane. In terms of biological role, the antenna complex functions as a light receptor, it captures and delivers excitation energy to photosystems II and I. The Prochlorales pcb genes are not related to higher plant LHCs. The sequence is that of Chlorophyll a/b light-harvesting protein PcbC (pcbC) from Prochlorothrix hollandica.